Here is a 229-residue protein sequence, read N- to C-terminus: Leucyl/phenylalanyl-tRNA--protein transferase (229 aa).

The protein belongs to the L/F-transferase family.

It localises to the cytoplasm. The enzyme catalyses N-terminal L-lysyl-[protein] + L-leucyl-tRNA(Leu) = N-terminal L-leucyl-L-lysyl-[protein] + tRNA(Leu) + H(+). It carries out the reaction N-terminal L-arginyl-[protein] + L-leucyl-tRNA(Leu) = N-terminal L-leucyl-L-arginyl-[protein] + tRNA(Leu) + H(+). It catalyses the reaction L-phenylalanyl-tRNA(Phe) + an N-terminal L-alpha-aminoacyl-[protein] = an N-terminal L-phenylalanyl-L-alpha-aminoacyl-[protein] + tRNA(Phe). Functions in the N-end rule pathway of protein degradation where it conjugates Leu, Phe and, less efficiently, Met from aminoacyl-tRNAs to the N-termini of proteins containing an N-terminal arginine or lysine. This is Leucyl/phenylalanyl-tRNA--protein transferase from Pseudomonas syringae pv. tomato (strain ATCC BAA-871 / DC3000).